Consider the following 379-residue polypeptide: MAKKDYYEVLGLSKGASEKDIKRAYKRLAAKHHPDKNQGSKESEEKFKEITEAYDVLTDSEKKAMYDQYGHAAFEQGGAGAGGFGGFGGGGFGGFEDIFSEMFGGGFGGGGRRQRVVRGDDLRYDIEITLEEAVKGCKKDIRIHTLAECDTCHGTGAEAGSKVETCSHCHGSGRIRRQQGFFVTDAVCPSCHGTGKRIEKPCRSCHGDGRVHKAKNLSVTIPAGVDTGNQLRLSREGAAGENGAPAGDLYVVIPVKEHDIFERDGSNLYCEVPIIFTLAALGGEIEMPTLDGQLKLKFRQKLQPVNYSVLRGKGVTSPRGGYAGDLICKVVVETPVNLTEEQKALLRQFEESLEGQGKHRPKHEGFFDGVKKFFDNLGK.

Residues 5–70 form the J domain; that stretch reads DYYEVLGLSK…EKKAMYDQYG (66 aa). The CR-type zinc-finger motif lies at 136–214; it reads GCKKDIRIHT…CHGDGRVHKA (79 aa). Residues C149, C152, C166, C169, C188, C191, C202, and C205 each contribute to the Zn(2+) site. 4 CXXCXGXG motif repeats span residues 149 to 156, 166 to 173, 188 to 195, and 202 to 209; these read CDTCHGTG, CSHCHGSG, CPSCHGTG, and CRSCHGDG.

It belongs to the DnaJ family. Homodimer. Zn(2+) is required as a cofactor.

It is found in the cytoplasm. In terms of biological role, participates actively in the response to hyperosmotic and heat shock by preventing the aggregation of stress-denatured proteins and by disaggregating proteins, also in an autonomous, DnaK-independent fashion. Unfolded proteins bind initially to DnaJ; upon interaction with the DnaJ-bound protein, DnaK hydrolyzes its bound ATP, resulting in the formation of a stable complex. GrpE releases ADP from DnaK; ATP binding to DnaK triggers the release of the substrate protein, thus completing the reaction cycle. Several rounds of ATP-dependent interactions between DnaJ, DnaK and GrpE are required for fully efficient folding. Also involved, together with DnaK and GrpE, in the DNA replication of plasmids through activation of initiation proteins. This is Chaperone protein DnaJ from Mannheimia haemolytica (Pasteurella haemolytica).